The sequence spans 372 residues: Protein RecA (372 aa).

Gly66–Thr73 provides a ligand contact to ATP. The segment at Gly328 to Thr359 is disordered. Residues Ala345 to Thr359 show a composition bias toward low complexity.

The protein belongs to the RecA family.

The protein localises to the cytoplasm. Its function is as follows. Can catalyze the hydrolysis of ATP in the presence of single-stranded DNA, the ATP-dependent uptake of single-stranded DNA by duplex DNA, and the ATP-dependent hybridization of homologous single-stranded DNAs. It interacts with LexA causing its activation and leading to its autocatalytic cleavage. The protein is Protein RecA of Streptomyces ambofaciens.